Reading from the N-terminus, the 272-residue chain is Small ribosomal subunit protein mS23 (272 aa).

Positions 233–272 (KENASKAAGDASAVSSEKQVEDDVVNFDESTDADQEVLHF) are disordered. Residues 252–272 (VEDDVVNFDESTDADQEVLHF) are compositionally biased toward acidic residues.

This sequence belongs to the mitochondrion-specific ribosomal protein mS23 family. In terms of assembly, component of the mitochondrial small ribosomal subunit.

Its subcellular location is the mitochondrion. In Candida glabrata (strain ATCC 2001 / BCRC 20586 / JCM 3761 / NBRC 0622 / NRRL Y-65 / CBS 138) (Yeast), this protein is Small ribosomal subunit protein mS23 (RSM25).